The sequence spans 741 residues: Protein ACCUMULATION AND REPLICATION OF CHLOROPLASTS 3, chloroplastic (741 aa).

Residues 1 to 41 (MPISMELPVFSTLRVPLFSRLALLPTFGVPFSSLGATTRLN) constitute a chloroplast transit peptide. 2 disordered regions span residues 444–465 (ENGDDSEYPLKEGEPSRNSRLD) and 539–558 (DSREESFFNPNGSTKDSSDT). Residues 451–465 (YPLKEGEPSRNSRLD) show a composition bias toward basic and acidic residues. Polar residues predominate over residues 546–558 (FNPNGSTKDSSDT). MORN repeat units follow at residues 612-628 (QGGLPEGKGRLVLGDGS), 630-652 (YDGMWHNGKRSGLGTFYFKNGDV), and 653-675 (FQGTWREDLIHGKGWFYFHKGDR).

In terms of assembly, self-interacts. Interacts with FTSZ, CDP1/PARC6 (via N-terminus), MIND1 and MINE1. Part of a complex made of ARC3, ARC6, FTSZ1 and FTSZ2. Recruited to the middle of the plastid by CDP1/PARC6 where subsequent complex made of CDP1/PARC6, ARC3 and FtsZ proteins can form; this complex enhances the dynamics of Z rings during chloroplast division. Binding to FTSZ2-1 is enabled by ARC6.

It localises to the plastid. The protein localises to the chloroplast outer membrane. The protein resides in the chloroplast stroma. Functionally, together with MIND1 and MCD1, regulates FtsZ ring positioning in chloroplasts in an ARC6-dependent manner. Z-ring accessory protein involved in the initiation of plastid division and division site placement (might functionally replace bacterial MinC). Acts as a disassembly factor that accelerates fragmentation and depolymerization of existing FtsZ2 filaments by enhancing FTSZ2 GTPase activity, thus leading to the conversion of FTSZ2 bound GTP into GDP, a process which triggers FtsZ2 filaments destabilization. Prevents misplaced Z-ring formation at chloroplast stroma nondivision sites. May control the rate of chloroplast expansion. Seems to influence stromule (stroma-filled tubular extensions of the plastid envelope membrane) length and frequency. This Arabidopsis thaliana (Mouse-ear cress) protein is Protein ACCUMULATION AND REPLICATION OF CHLOROPLASTS 3, chloroplastic.